The chain runs to 522 residues: MGNEEISDFEKQRLANIAERDALLKQLSLNAQSVFTPTLPNRATGSQAKTKKKPAPKKVKKEEESPAPRRMSSRLRGIAADSEVAKRKAEEQHQAYQEAERAKRVRKSDSFSLNDIFVSGQKLSGDGLLGVDVVTKGVAVPYQRTFGDDDIKKTTDKELKALRKEMSELQLWEAWEPNRIKLTPERVYTMTFHPSETKPLIFAGDKMGHLGILDASQEKPTSVKQEDEDEEDDDPDPVLTTLKPHTRTISSMVIHPSKPTHLYTASYDSSIREMDLDKTTSVERYAPDSTSDDVPLSGLDMAADDPNTLYWTTLEGEFGRYDMRTPKQGSVAVWSLSEKKIGGFSLFPTHSHYFATASLDRTMRLWDIRKLSRREPVPVGEHQSRLSVSHAAFNSAGQVATSSYDDSLKLYDFGAKGIASWKPGHTLSDAEMKPDTVVRHNCQTGRWVTILRPQWQINPQSHIQRFCIGNMNRFVDVYSSSGDQLAQLGGDGITAVPAVAVFHRSKNWIAGGTASGKICLWM.

Residues 34 to 47 (VFTPTLPNRATGSQ) show a composition bias toward polar residues. Disordered stretches follow at residues 34 to 89 (VFTP…KRKA) and 217 to 239 (QEKP…DPVL). A compositionally biased stretch (basic residues) spans 49–59 (KTKKKPAPKKV). Residues 182–223 (LTPERVYTMTFHPSETKPLIFAGDKMGHLGILDASQEKPTSV) form a WD 1 repeat. Acidic residues predominate over residues 226–236 (EDEDEEDDDPD). WD repeat units follow at residues 244-284 (PHTR…SVER), 294-331 (VPLS…QGSV), 336-376 (LSEK…RREP), 381-422 (EHQS…ASWK), 445-488 (GRWV…LAQL), and 491-522 (DGIT…CLWM).

Belongs to the WD repeat DDB2/WDR76 family.

Functionally, DNA-binding protein that binds to both single- and double-stranded DNA. Binds preferentially to UV-damaged DNA. May be involved in DNA-metabolic processes. The chain is DNA damage-binding protein cmr1 from Aspergillus oryzae (strain ATCC 42149 / RIB 40) (Yellow koji mold).